The following is a 249-amino-acid chain: Protein ZPS1 (249 aa).

The signal sequence occupies residues 1–20 (MKFSSGKSIIFATIASLALS). N-linked (GlcNAc...) asparagine glycosylation is found at N28, N57, N98, and N217.

The protein belongs to the ZPS1 family.

The chain is Protein ZPS1 (ZPS1) from Saccharomyces cerevisiae (strain ATCC 204508 / S288c) (Baker's yeast).